Here is a 159-residue protein sequence, read N- to C-terminus: Phosphopantetheine adenylyltransferase (159 aa).

Serine 9 contributes to the substrate binding site. ATP is bound by residues 9–10 (SF) and histidine 17. The substrate site is built by lysine 41, leucine 73, and arginine 87. ATP-binding positions include 88 to 90 (GLR), glutamate 98, and 123 to 129 (YSYVSSS).

This sequence belongs to the bacterial CoaD family. As to quaternary structure, homohexamer. It depends on Mg(2+) as a cofactor.

Its subcellular location is the cytoplasm. It carries out the reaction (R)-4'-phosphopantetheine + ATP + H(+) = 3'-dephospho-CoA + diphosphate. It participates in cofactor biosynthesis; coenzyme A biosynthesis; CoA from (R)-pantothenate: step 4/5. In terms of biological role, reversibly transfers an adenylyl group from ATP to 4'-phosphopantetheine, yielding dephospho-CoA (dPCoA) and pyrophosphate. This Shouchella clausii (strain KSM-K16) (Alkalihalobacillus clausii) protein is Phosphopantetheine adenylyltransferase.